Reading from the N-terminus, the 140-residue chain is Ig heavy chain V region 93G7 (140 aa).

The signal sequence occupies residues 1–19 (MGWSFIFLFLLSVTAGVHS). One can recognise an Ig-like domain in the interval 20-139 (EVQLQQSGAE…WGQGTPLTVS (120 aa)).

This is Ig heavy chain V region 93G7 from Mus musculus (Mouse).